The primary structure comprises 339 residues: MSDNGQNSASPHIPVMLADVLDVLKPRDGGVYVDGTFGAGGYTRAILGSADCAVLAIDRDPTAILRGRALATEFAGRLTLIEGRFGDMKRLVRELGHGTVDGVVLDIGVSSMQLDQAERGFSFQQDGPLDMRMGGEGPSAADVVNHFDEADLARIIAVYGEEKRARAVARAIVAARQTAELHRTLELADLVASVIHRKPQDRIHPATRTFQALRIFVNDELGELARGLSGAEDLLHEGGRLAVVAFHSLEDRIVKRFLTARTGRAGRANRYMPERDEVAPSFREIAHKAMKASEEEVEINVRARSAKLRAAERTAAPALPLDLAALGFRAVPTLDGSLA.

Residues 40 to 42, aspartate 58, phenylalanine 85, aspartate 106, and glutamine 113 each bind S-adenosyl-L-methionine; that span reads GGY.

The protein belongs to the methyltransferase superfamily. RsmH family.

It localises to the cytoplasm. The enzyme catalyses cytidine(1402) in 16S rRNA + S-adenosyl-L-methionine = N(4)-methylcytidine(1402) in 16S rRNA + S-adenosyl-L-homocysteine + H(+). Functionally, specifically methylates the N4 position of cytidine in position 1402 (C1402) of 16S rRNA. The polypeptide is Ribosomal RNA small subunit methyltransferase H (Parvibaculum lavamentivorans (strain DS-1 / DSM 13023 / NCIMB 13966)).